The primary structure comprises 95 residues: Integration host factor subunit beta (95 aa).

Residues 56–76 (RAPRTGRNPKTGTSVELDGKY) form a disordered region.

This sequence belongs to the bacterial histone-like protein family. As to quaternary structure, heterodimer of an alpha and a beta chain.

In terms of biological role, this protein is one of the two subunits of integration host factor, a specific DNA-binding protein that functions in genetic recombination as well as in transcriptional and translational control. In Shewanella denitrificans (strain OS217 / ATCC BAA-1090 / DSM 15013), this protein is Integration host factor subunit beta.